The primary structure comprises 272 residues: Putative phosphoenolpyruvate synthase regulatory protein (272 aa).

151 to 158 contacts ADP; that stretch reads GVSRSGKT.

The protein belongs to the pyruvate, phosphate/water dikinase regulatory protein family. PSRP subfamily.

It carries out the reaction [pyruvate, water dikinase] + ADP = [pyruvate, water dikinase]-phosphate + AMP + H(+). The enzyme catalyses [pyruvate, water dikinase]-phosphate + phosphate + H(+) = [pyruvate, water dikinase] + diphosphate. Its function is as follows. Bifunctional serine/threonine kinase and phosphorylase involved in the regulation of the phosphoenolpyruvate synthase (PEPS) by catalyzing its phosphorylation/dephosphorylation. The chain is Putative phosphoenolpyruvate synthase regulatory protein from Desulfotalea psychrophila (strain LSv54 / DSM 12343).